The following is a 182-amino-acid chain: Translation initiation factor IF-3 (182 aa).

Positions 1–22 are disordered; it reads MPLGDCNISTPDNKQNRKNQEI.

This sequence belongs to the IF-3 family. Monomer.

It localises to the cytoplasm. Functionally, IF-3 binds to the 30S ribosomal subunit and shifts the equilibrium between 70S ribosomes and their 50S and 30S subunits in favor of the free subunits, thus enhancing the availability of 30S subunits on which protein synthesis initiation begins. This chain is Translation initiation factor IF-3, found in Xanthomonas campestris pv. campestris (strain ATCC 33913 / DSM 3586 / NCPPB 528 / LMG 568 / P 25).